We begin with the raw amino-acid sequence, 490 residues long: Cardiolipin synthase 1 (490 aa).

2 helical membrane passes run 9–29 (ILTI…FVII) and 42–62 (WAWL…YLFL). 2 PLD phosphodiesterase domains span residues 225 to 252 (MNNR…GDDY) and 403 to 430 (QNGF…DFRS). Active-site residues include histidine 230, lysine 232, aspartate 237, histidine 408, lysine 410, and aspartate 415.

This sequence belongs to the phospholipase D family. Cardiolipin synthase subfamily.

It is found in the cell membrane. It catalyses the reaction 2 a 1,2-diacyl-sn-glycero-3-phospho-(1'-sn-glycerol) = a cardiolipin + glycerol. Functionally, catalyzes the reversible phosphatidyl group transfer from one phosphatidylglycerol molecule to another to form cardiolipin (CL) (diphosphatidylglycerol) and glycerol. The polypeptide is Cardiolipin synthase 1 (cls1) (Staphylococcus epidermidis (strain ATCC 35984 / DSM 28319 / BCRC 17069 / CCUG 31568 / BM 3577 / RP62A)).